A 430-amino-acid chain; its full sequence is Synaptotagmin-11 (430 aa).

At 1 to 15 (MAEITNIRPSFDVSP) the chain is on the vesicular side. A helical membrane pass occupies residues 16–36 (VAAGLIGASVLVVCVSVTVFV). Residues 37–430 (WTCCHQQAEK…IAKWHSLSEY (394 aa)) lie on the Cytoplasmic side of the membrane. Basic and acidic residues predominate over residues 79–90 (RRDKDGPRRESG). Disordered stretches follow at residues 79–120 (RRDK…CMDQ) and 132–152 (RSPM…SSPE). Position 133 is a phosphoserine (Ser133). Over residues 134 to 150 (PMTSLTPGESKATSPSS) the composition is skewed to polar residues. C2 domains follow at residues 156–278 (MLGS…QLTR) and 290–425 (SRGE…AKWH). Positions 249, 252, and 255 each coordinate Ca(2+).

It belongs to the synaptotagmin family. In terms of assembly, homodimer. Can also form heterodimers. Interacts with PRKN. Interacts (via C2 2 domain) with AGO2 and SND1; the interaction with SND1 is direct. Interacts with KIF1A; the interaction increases in presence of calcium. Requires Ca(2+) as cofactor. In terms of processing, ubiquitinated, at least by PRKN, and targeted to the proteasome complex for degradation. Ubiquitination is inhibited by ATP13A2. Expressed in cerebellun, cerebellar cortex, hippocampus, olfactory bulb and spinal cord (at protein level). Expressed by neurons, astrocytes and microglia (at protein level). Expressed in macrophages (at protein level).

It localises to the cytoplasmic vesicle membrane. The protein localises to the perikaryon. It is found in the golgi apparatus. Its subcellular location is the trans-Golgi network membrane. The protein resides in the recycling endosome membrane. It localises to the lysosome membrane. The protein localises to the cytoplasmic vesicle. It is found in the phagosome. Its subcellular location is the cell projection. The protein resides in the axon. It localises to the dendrite. The protein localises to the postsynaptic density. It is found in the clathrin-coated vesicle membrane. In terms of biological role, synaptotagmin family member involved in vesicular and membrane trafficking which does not bind Ca(2+). Inhibits clathrin-mediated and bulk endocytosis, functions to ensure precision in vesicle retrieval. Plays an important role in dopamine transmission by regulating endocytosis and the vesicle-recycling process. Essential component of a neuronal vesicular trafficking pathway that differs from the synaptic vesicle trafficking pathway but is crucial for development and synaptic plasticity. In macrophages and microglia, inhibits the conventional cytokine secretion, of at least IL6 and TNF, and phagocytosis. In astrocytes, regulates lysosome exocytosis, mechanism required for the repair of injured astrocyte cell membrane. Required for the ATP13A2-mediated regulation of the autophagy-lysosome pathway. The polypeptide is Synaptotagmin-11 (Mus musculus (Mouse)).